The primary structure comprises 299 residues: 4-diphosphocytidyl-2-C-methyl-D-erythritol kinase (299 aa).

Residue Lys-10 is part of the active site. An ATP-binding site is contributed by 96–106 (PVAGGMAGGSA). Asp-138 is a catalytic residue.

Belongs to the GHMP kinase family. IspE subfamily.

It carries out the reaction 4-CDP-2-C-methyl-D-erythritol + ATP = 4-CDP-2-C-methyl-D-erythritol 2-phosphate + ADP + H(+). Its pathway is isoprenoid biosynthesis; isopentenyl diphosphate biosynthesis via DXP pathway; isopentenyl diphosphate from 1-deoxy-D-xylulose 5-phosphate: step 3/6. In terms of biological role, catalyzes the phosphorylation of the position 2 hydroxy group of 4-diphosphocytidyl-2C-methyl-D-erythritol. This chain is 4-diphosphocytidyl-2-C-methyl-D-erythritol kinase, found in Streptomyces coelicolor (strain ATCC BAA-471 / A3(2) / M145).